Consider the following 316-residue polypeptide: Probable porphobilinogen deaminase (316 aa).

Position 234 is an S-(dipyrrolylmethanemethyl)cysteine (Cys234).

This sequence belongs to the HMBS family. Dipyrromethane is required as a cofactor.

The enzyme catalyses 4 porphobilinogen + H2O = hydroxymethylbilane + 4 NH4(+). It functions in the pathway porphyrin-containing compound metabolism; protoporphyrin-IX biosynthesis; coproporphyrinogen-III from 5-aminolevulinate: step 2/4. Functionally, tetrapolymerization of the monopyrrole PBG into the hydroxymethylbilane pre-uroporphyrinogen in several discrete steps. This Methanosarcina barkeri (strain Fusaro / DSM 804) protein is Probable porphobilinogen deaminase.